The primary structure comprises 128 residues: CD59 glycoprotein (128 aa).

Residues 1–25 form the signal peptide; that stretch reads MGIQGGSVLFGLLLVLAVFCHSGNS. The 83-residue stretch at 26–108 folds into the UPAR/Ly6 domain; the sequence is LQCYSCPYPT…ALKNGGTTLS (83 aa). 5 cysteine pairs are disulfide-bonded: C28-C51, C31-C38, C44-C64, C70-C88, and C89-C94. A glycan (N-linked (GlcNAc...) asparagine) is linked at N43. Residue N102 is the site of GPI-anchor amidated asparagine attachment. A propeptide spans 103 to 128 (removed in mature form); sequence GGTTLSKKTVLLLVIPFLVAAWSLHP.

As to quaternary structure, interacts with T-cell surface antigen CD2. In terms of processing, N- and O-glycosylated.

Its subcellular location is the cell membrane. It localises to the secreted. Functionally, potent inhibitor of the complement membrane attack complex (MAC) action, which protects self-cells from damage during complement activation. Acts by binding to the beta-haipins of C8 (C8A and C8B) components of the assembling MAC, forming an intermolecular beta-sheet that prevents incorporation of the multiple copies of C9 required for complete formation of the osmolytic pore. The polypeptide is CD59 glycoprotein (Aotus trivirgatus (Three-striped night monkey)).